The chain runs to 119 residues: Large ribosomal subunit protein bL19 (119 aa).

It belongs to the bacterial ribosomal protein bL19 family.

This protein is located at the 30S-50S ribosomal subunit interface and may play a role in the structure and function of the aminoacyl-tRNA binding site. The protein is Large ribosomal subunit protein bL19 of Limosilactobacillus reuteri (strain DSM 20016) (Lactobacillus reuteri).